A 143-amino-acid polypeptide reads, in one-letter code: Large ribosomal subunit protein uL11 (143 aa).

It belongs to the universal ribosomal protein uL11 family. Part of the ribosomal stalk of the 50S ribosomal subunit. Interacts with L10 and the large rRNA to form the base of the stalk. L10 forms an elongated spine to which L12 dimers bind in a sequential fashion forming a multimeric L10(L12)X complex. In terms of processing, one or more lysine residues are methylated.

Forms part of the ribosomal stalk which helps the ribosome interact with GTP-bound translation factors. The protein is Large ribosomal subunit protein uL11 of Bifidobacterium longum subsp. infantis (strain ATCC 15697 / DSM 20088 / JCM 1222 / NCTC 11817 / S12).